A 78-amino-acid polypeptide reads, in one-letter code: Gas vesicle protein A (78 aa).

Residues leucine 9–lysine 19 are alpha helix 1. The tract at residues valine 23–leucine 31 is beta-strand 1. Residues valine 32 to isoleucine 34 form a beta turn region. The beta-strand 2 stretch occupies residues glutamate 35–valine 43. The tract at residues valine 48–threonine 67 is alpha helix 2.

Belongs to the gas vesicle GvpA family. The gas vesicle shell is 2 nm thick and consists of a single layer of this protein. It forms helical ribs nearly perpendicular to the long axis of the vesicle. Modeled as antiparallel homodimers.

The protein resides in the gas vesicle shell. Gas vesicles are hollow, gas filled proteinaceous nanostructures found in some microorganisms. During planktonic growth they allow positioning of the organism at a favorable depth for light or nutrient acquisition. GvpA forms the protein shell. This gene replaces p-gvpA of H.salinarum very poorly, only about 1% of GVs are formed; the few gas vesicles formed are quite strong with a very high critical collapse pressure (CCP) of 0.213 MPa. In terms of biological role, expression of a 9.5 kb mc-vac DNA fragment containing 2 divergently transcribed regions (gvpD-gvpE-gvpF-gvpG-gvpH-gvpI-gvpJ-gvpK-gvpL-gvpM and gvpA-gvpC-gvpN-gvpO) allows H.volcanii to produce gas vesicles. The protein is Gas vesicle protein A of Haloferax mediterranei (strain ATCC 33500 / DSM 1411 / JCM 8866 / NBRC 14739 / NCIMB 2177 / R-4) (Halobacterium mediterranei).